The primary structure comprises 467 residues: tRNA-2-methylthio-N(6)-dimethylallyladenosine synthase (467 aa).

Positions 5-125 (RKLHIKSYGC…LPQLLAQASR (121 aa)) constitute an MTTase N-terminal domain. Cys14, Cys50, Cys88, Cys166, Cys170, and Cys173 together coordinate [4Fe-4S] cluster. The 233-residue stretch at 152–384 (RARGVSAFVT…QSLIDSQQAA (233 aa)) folds into the Radical SAM core domain. The 63-residue stretch at 387–449 (KAAIGSVVDV…RYSLLGELVA (63 aa)) folds into the TRAM domain.

This sequence belongs to the methylthiotransferase family. MiaB subfamily. Monomer. Requires [4Fe-4S] cluster as cofactor.

The protein resides in the cytoplasm. The enzyme catalyses N(6)-dimethylallyladenosine(37) in tRNA + (sulfur carrier)-SH + AH2 + 2 S-adenosyl-L-methionine = 2-methylsulfanyl-N(6)-dimethylallyladenosine(37) in tRNA + (sulfur carrier)-H + 5'-deoxyadenosine + L-methionine + A + S-adenosyl-L-homocysteine + 2 H(+). Functionally, catalyzes the methylthiolation of N6-(dimethylallyl)adenosine (i(6)A), leading to the formation of 2-methylthio-N6-(dimethylallyl)adenosine (ms(2)i(6)A) at position 37 in tRNAs that read codons beginning with uridine. This Bradyrhizobium sp. (strain ORS 278) protein is tRNA-2-methylthio-N(6)-dimethylallyladenosine synthase.